Consider the following 235-residue polypeptide: Caveolin-1 (235 aa).

Topologically, residues 1–161 are cytoplasmic; it reads MSTEQDIKTE…LVSLLALPFT (161 aa). Residues 29-72 form a disordered region; it reads GEAVVAPEEPKPKKNWFTFGKKKAAPTDETNIEEGGAPGDEPVK. Residues 162–182 constitute an intramembrane region (helical); sequence IIFAIFFGLLASINVFIIVPL. At 183-235 the chain is on the cytoplasmic side; the sequence is GKLLSIPGTLLAKLWNWLIHAIFDPIASAVGLIFSNFNIRKYGINQETTAPCV. Cys-234 carries S-palmitoyl cysteine lipidation.

This sequence belongs to the caveolin family. Homooligomer containing 14-16 monomers per oligomer.

The protein resides in the golgi apparatus membrane. It is found in the cell membrane. Its subcellular location is the membrane. It localises to the caveola. Its function is as follows. May act as a scaffolding protein within caveolar membranes. Interacts directly with G-protein alpha subunits and can functionally regulate their activity. The sequence is that of Caveolin-1 (cav-1) from Caenorhabditis elegans.